The primary structure comprises 417 residues: V-set and immunoglobulin domain-containing protein 8 (417 aa).

The signal sequence occupies residues 1-21 (MGVRGALHLLLVCLSPALLSA). 2 consecutive Ig-like V-type domains span residues 22–140 (VRIN…VIVT) and 145–256 (PAVP…VKVS). The Extracellular portion of the chain corresponds to 22 to 262 (VRINGDGQEV…VKVSDSQRVG (241 aa)). 2 cysteine pairs are disulfide-bonded: C44–C125 and C166–C238. A helical transmembrane segment spans residues 263–283 (MIVGAVLGSLLMLACLALGIW). Over 284–417 (GLICCCCGGG…QRSCKDGLLV (134 aa)) the chain is Cytoplasmic.

It is found in the membrane. The protein is V-set and immunoglobulin domain-containing protein 8 (Vsig8) of Mus musculus (Mouse).